Consider the following 348-residue polypeptide: Dihydroorotase (348 aa).

Zn(2+) contacts are provided by His-14 and His-16. Substrate contacts are provided by residues 16-18 and Asn-42; that span reads HLR. Residues Lys-100, His-137, and His-175 each contribute to the Zn(2+) site. The residue at position 100 (Lys-100) is an N6-carboxylysine. His-137 is a binding site for substrate. Position 220 (Leu-220) interacts with substrate. Asp-248 contributes to the Zn(2+) binding site. Residue Asp-248 is part of the active site. 2 residues coordinate substrate: His-252 and Ala-264.

Belongs to the metallo-dependent hydrolases superfamily. DHOase family. Class II DHOase subfamily. As to quaternary structure, homodimer. Zn(2+) serves as cofactor.

The enzyme catalyses (S)-dihydroorotate + H2O = N-carbamoyl-L-aspartate + H(+). It functions in the pathway pyrimidine metabolism; UMP biosynthesis via de novo pathway; (S)-dihydroorotate from bicarbonate: step 3/3. Functionally, catalyzes the reversible cyclization of carbamoyl aspartate to dihydroorotate. In Pseudomonas aeruginosa (strain ATCC 15692 / DSM 22644 / CIP 104116 / JCM 14847 / LMG 12228 / 1C / PRS 101 / PAO1), this protein is Dihydroorotase.